The following is a 196-amino-acid chain: Protein LSM12 homolog B (196 aa).

Residues 3-70 (APGPGEYFSV…LAYVSEVDII (68 aa)) enclose the Sm domain. The 95-residue stretch at 81–175 (ASLNFNKLVN…IVEKHFRDVE (95 aa)) folds into the AD domain.

Belongs to the LSM12 family.

The chain is Protein LSM12 homolog B (lsm12b) from Danio rerio (Zebrafish).